A 290-amino-acid polypeptide reads, in one-letter code: Ribosomal RNA small subunit methyltransferase A (290 aa).

Positions 27, 29, 54, 75, 100, and 125 each coordinate S-adenosyl-L-methionine.

This sequence belongs to the class I-like SAM-binding methyltransferase superfamily. rRNA adenine N(6)-methyltransferase family. RsmA subfamily.

It is found in the cytoplasm. The catalysed reaction is adenosine(1518)/adenosine(1519) in 16S rRNA + 4 S-adenosyl-L-methionine = N(6)-dimethyladenosine(1518)/N(6)-dimethyladenosine(1519) in 16S rRNA + 4 S-adenosyl-L-homocysteine + 4 H(+). Its function is as follows. Specifically dimethylates two adjacent adenosines (A1518 and A1519) in the loop of a conserved hairpin near the 3'-end of 16S rRNA in the 30S particle. May play a critical role in biogenesis of 30S subunits. In Streptococcus pyogenes serotype M3 (strain ATCC BAA-595 / MGAS315), this protein is Ribosomal RNA small subunit methyltransferase A.